A 273-amino-acid chain; its full sequence is Probable nicotinate-nucleotide pyrophosphorylase [carboxylating] (273 aa).

Residues R91, 124-126 (TRK), R148, K158, E188, D209, 235-237 (SGN), and 256-258 (VGA) contribute to the substrate site.

This sequence belongs to the NadC/ModD family. Hexamer formed by 3 homodimers.

The enzyme catalyses nicotinate beta-D-ribonucleotide + CO2 + diphosphate = quinolinate + 5-phospho-alpha-D-ribose 1-diphosphate + 2 H(+). Its pathway is cofactor biosynthesis; NAD(+) biosynthesis; nicotinate D-ribonucleotide from quinolinate: step 1/1. In terms of biological role, involved in the catabolism of quinolinic acid (QA). This Helicobacter pylori (strain J99 / ATCC 700824) (Campylobacter pylori J99) protein is Probable nicotinate-nucleotide pyrophosphorylase [carboxylating] (nadC).